A 328-amino-acid chain; its full sequence is Formimidoylglutamase (328 aa).

Mn(2+) is bound by residues His-133, Asp-159, His-161, Asp-163, Asp-253, and Asp-255.

It belongs to the arginase family. Requires Mn(2+) as cofactor.

The catalysed reaction is N-formimidoyl-L-glutamate + H2O = formamide + L-glutamate. It functions in the pathway amino-acid degradation; L-histidine degradation into L-glutamate; L-glutamate from N-formimidoyl-L-glutamate (hydrolase route): step 1/1. Its function is as follows. Catalyzes the conversion of N-formimidoyl-L-glutamate to L-glutamate and formamide. The sequence is that of Formimidoylglutamase from Streptococcus pyogenes serotype M5 (strain Manfredo).